The following is an 88-amino-acid chain: UPF0367 protein Synpcc7942_1638 (88 aa).

The protein belongs to the UPF0367 family.

The chain is UPF0367 protein Synpcc7942_1638 from Synechococcus elongatus (strain ATCC 33912 / PCC 7942 / FACHB-805) (Anacystis nidulans R2).